The sequence spans 502 residues: Lanosterol 14-alpha demethylase (502 aa).

Residues 22–42 (GNLASMLLIACAFTLSLVYLF) form a helical membrane-spanning segment. C448 contributes to the heme binding site.

This sequence belongs to the cytochrome P450 family. Heme serves as cofactor. In terms of processing, ubiquitinated by MARCHF6, leading to proteasomal degradation.

The protein localises to the endoplasmic reticulum membrane. It localises to the microsome membrane. It catalyses the reaction a 14alpha-methyl steroid + 3 reduced [NADPH--hemoprotein reductase] + 3 O2 = a Delta(14) steroid + formate + 3 oxidized [NADPH--hemoprotein reductase] + 4 H2O + 4 H(+). The catalysed reaction is lanosterol + 3 reduced [NADPH--hemoprotein reductase] + 3 O2 = 4,4-dimethyl-5alpha-cholesta-8,14,24-trien-3beta-ol + formate + 3 oxidized [NADPH--hemoprotein reductase] + 4 H2O + 4 H(+). The enzyme catalyses 24,25-dihydrolanosterol + 3 reduced [NADPH--hemoprotein reductase] + 3 O2 = 4,4-dimethyl-8,14-cholestadien-3beta-ol + formate + 3 oxidized [NADPH--hemoprotein reductase] + 4 H2O + 4 H(+). It carries out the reaction a 14alpha-methyl steroid + reduced [NADPH--hemoprotein reductase] + O2 = a 14alpha-hydroxymethyl steroid + oxidized [NADPH--hemoprotein reductase] + H2O + H(+). It catalyses the reaction a 14alpha-hydroxymethyl steroid + reduced [NADPH--hemoprotein reductase] + O2 = a 14alpha-formyl steroid + oxidized [NADPH--hemoprotein reductase] + 2 H2O + H(+). The catalysed reaction is a 14alpha-formyl steroid + reduced [NADPH--hemoprotein reductase] + O2 = a Delta(14) steroid + formate + oxidized [NADPH--hemoprotein reductase] + H2O + 2 H(+). The enzyme catalyses lanosterol + reduced [NADPH--hemoprotein reductase] + O2 = 32-hydroxylanosterol + oxidized [NADPH--hemoprotein reductase] + H2O + H(+). It carries out the reaction 32-hydroxylanosterol + reduced [NADPH--hemoprotein reductase] + O2 = 32-oxolanosterol + oxidized [NADPH--hemoprotein reductase] + 2 H2O + H(+). It catalyses the reaction 32-oxolanosterol + reduced [NADPH--hemoprotein reductase] + O2 = 4,4-dimethyl-5alpha-cholesta-8,14,24-trien-3beta-ol + formate + oxidized [NADPH--hemoprotein reductase] + H2O + 2 H(+). The catalysed reaction is 24,25-dihydrolanosterol + reduced [NADPH--hemoprotein reductase] + O2 = 32-hydroxy-24,25-dihydrolanosterol + oxidized [NADPH--hemoprotein reductase] + H2O + H(+). The enzyme catalyses 32-hydroxy-24,25-dihydrolanosterol + reduced [NADPH--hemoprotein reductase] + O2 = 32-oxo-24,25-dihydrolanosterol + oxidized [NADPH--hemoprotein reductase] + 2 H2O + H(+). It carries out the reaction 32-oxo-24,25-dihydrolanosterol + reduced [NADPH--hemoprotein reductase] + O2 = 4,4-dimethyl-8,14-cholestadien-3beta-ol + formate + oxidized [NADPH--hemoprotein reductase] + H2O + 2 H(+). The protein operates within steroid biosynthesis; zymosterol biosynthesis; zymosterol from lanosterol: step 1/6. With respect to regulation, inhibited by azalanstat. Inhibited by azole antifungal agents ketoconazole, itraconazole and fluconazole. Sterol 14alpha-demethylase that plays a critical role in the cholesterol biosynthesis pathway, being cholesterol the major sterol component in mammalian membranes as well as a precursor for bile acid and steroid hormone synthesis. Cytochrome P450 monooxygenase that catalyzes the three-step oxidative removal of the 14alpha-methyl group (C-32) of sterols such as lanosterol (lanosta-8,24-dien-3beta-ol) and 24,25-dihydrolanosterol (DHL) in the form of formate, and converts the sterols to 4,4-dimethyl-5alpha-cholesta-8,14,24-trien-3beta-ol and 4,4-dimethyl-8,14-cholestadien-3beta-ol, respectively, which are intermediates of cholesterol biosynthesis. Can also demethylate substrates not intrinsic to mammals, such as eburicol (24-methylene-24,25-dihydrolanosterol), but at a lower rate than DHL. In Bos taurus (Bovine), this protein is Lanosterol 14-alpha demethylase.